The following is a 115-amino-acid chain: NADH-ubiquinone oxidoreductase chain 3 (115 aa).

The next 3 membrane-spanning stretches (helical) occupy residues 3-23, 55-75, and 84-104; these read LLMALFIDASLSLILISIAFW, FFLVAITFLLFDLEIALLLPL, and LSAMMVTSFILISVLALGLMY.

This sequence belongs to the complex I subunit 3 family. Core subunit of respiratory chain NADH dehydrogenase (Complex I) which is composed of 45 different subunits. Interacts with TMEM186. Interacts with TMEM242.

It localises to the mitochondrion inner membrane. The catalysed reaction is a ubiquinone + NADH + 5 H(+)(in) = a ubiquinol + NAD(+) + 4 H(+)(out). Its function is as follows. Core subunit of the mitochondrial membrane respiratory chain NADH dehydrogenase (Complex I) which catalyzes electron transfer from NADH through the respiratory chain, using ubiquinone as an electron acceptor. Essential for the catalytic activity of complex I. The protein is NADH-ubiquinone oxidoreductase chain 3 of Sigmodon ochrognathus (Yellow-nosed cotton rat).